Consider the following 190-residue polypeptide: FMN reductase (NADH) RutF (190 aa).

The protein belongs to the non-flavoprotein flavin reductase family. RutF subfamily.

It catalyses the reaction FMNH2 + NAD(+) = FMN + NADH + 2 H(+). Its function is as follows. Catalyzes the reduction of FMN to FMNH2 which is used to reduce pyrimidine by RutA via the Rut pathway. In Pantoea ananatis (strain LMG 20103), this protein is FMN reductase (NADH) RutF.